Consider the following 446-residue polypeptide: Transcription factor Dp-2 (446 aa).

Thr2 bears the N-acetylthreonine mark. Phosphoserine; by CDK2 occurs at positions 24 and 42. An interaction with CEBPA region spans residues 60-82 (PQMIISTPQRIANSGSVLIGNPY). Residues 103 to 118 (SDRKRAREFIDSDFSE) carry the Nuclear localization signal motif. Ser122 is modified (phosphoserine). The DNA-binding element occupies 129–210 (GKGLRHFSMK…PTGKKRNQVD (82 aa)). A DEF box motif is present at residues 176 to 210 (DQENIRRRVYDALNVLMAMNIISSLPTGKKRNQVD). Residues 219–292 (NLEIEKQRRI…RKTVIDCSIS (74 aa)) form a dimerization region. The segment at 229–261 (ERIKQKRAQLQELLLQQIAFKNLVQRNRQNEQQ) is DCB1. The tract at residues 274-330 (LPFIIINTSRKTVIDCSISSDKFEYLFNFDNTFEIHDDIEVLKRMGMSFGLESGKCS) is DCB2. Residues 404–446 (LPASNSHQSSSAASHFSESRGETPCSFNDEDEEDEEEDPSSPE) are disordered. Residues 406–419 (ASNSHQSSSAASHF) show a composition bias toward low complexity. A compositionally biased stretch (acidic residues) spans 431–446 (NDEDEEDEEEDPSSPE).

Belongs to the E2F/DP family. As to quaternary structure, component of the DRTF1/E2F transcription factor complex. Forms heterodimers with E2F family members. The complex can interact with hypophosphorylated retinoblastoma protein RB1 and related proteins (RBL1 and RBL2) that inhibit the E2F transactivation domain. During the cell cycle, RB becomes phosphorylated in mid-to-late G1 phase, detaches from the DRTF1/E2F complex rendering E2F transcriptionally active. Interacts with GMCL. Component of the DREAM complex (also named LINC complex) at least composed of E2F4, E2F5, LIN9, LIN37, LIN52, LIN54, MYBL1, MYBL2, RBL1, RBL2, RBBP4, TFDP1 and TFDP2. The complex exists in quiescent cells where it represses cell cycle-dependent genes. It dissociates in S phase when LIN9, LIN37, LIN52 and LIN54 form a subcomplex that binds to MYBL2. The complex TFDP2:E2F1 interacts with CEBPA; the interaction prevents CEBPA binding to target gene promoters and represses its transcriptional activity. Post-translationally, phosphorylation by E2F1-bound cyclin A-CDK2, in the S phase, inhibits E2F-mediated DNA binding and transactivation. In terms of tissue distribution, expressed in all tissues examined. Highest levels in spleen and heart.

The protein resides in the nucleus. In terms of biological role, can stimulate E2F-dependent transcription. Binds DNA cooperatively with E2F family members through the E2 recognition site, 5'-TTTC[CG]CGC-3', found in the promoter region of a number of genes whose products are involved in cell cycle regulation or in DNA replication. The TFDP2:E2F complex functions in the control of cell-cycle progression from G1 to S phase. The E2F1:DP complex appears to mediate both cell proliferation and apoptosis. Blocks adipocyte differentiation by repressing CEBPA binding to its target gene promoters. The polypeptide is Transcription factor Dp-2 (Tfdp2) (Mus musculus (Mouse)).